The primary structure comprises 361 residues: Nuclear pore complex protein NUP43 (361 aa).

A disordered region spans residues 51–73 (IQSLDPNPRGNHNTNPLIESLSS). WD repeat units lie at residues 132–173 (FHVG…YRKV), 177–215 (NGLV…EAVS), and 225–265 (KTSA…QPIV).

As to quaternary structure, part of the nuclear pore complex (NPC). The NPC has an eight-fold symmetrical structure comprising a central transport channel and two rings, the cytoplasmic and nuclear rings, to which eight filaments are attached. The cytoplasmic filaments have loose ends, while the nuclear filaments are joined in a distal ring, forming a nuclear basket. NPCs are highly dynamic in configuration and composition, and can be devided in 3 subcomplexes, the NUP62 subcomplex, the NUP107-160 subcomplex and the NUP93 subcomplex, containing approximately 30 different nucleoporin proteins.

It is found in the nucleus envelope. It localises to the nucleus. The protein resides in the nuclear pore complex. This chain is Nuclear pore complex protein NUP43, found in Arabidopsis thaliana (Mouse-ear cress).